The sequence spans 301 residues: 1,5-anhydro-D-fructose reductase (301 aa).

An NADP(+)-binding site is contributed by D35. The active-site Proton donor is the Y40. H102 contributes to the substrate binding site. NADP(+) is bound by residues Q175 and 246-258 (IPKS…IREN).

It belongs to the aldo/keto reductase family. In terms of assembly, monomer.

It localises to the cytoplasm. It carries out the reaction 1,5-anhydro-D-glucitol + NADP(+) = 1,5-anhydro-D-fructose + NADPH + H(+). Its activity is regulated as follows. Inhibited by p-chloromercuribenzoic acid and alkyliodines. Functionally, catalyzes the NADPH-dependent reduction of 1,5-anhydro-D-fructose (AF) to 1,5-anhydro-D-glucitol. This chain is 1,5-anhydro-D-fructose reductase (Akr1e2), found in Mus musculus (Mouse).